We begin with the raw amino-acid sequence, 240 residues long: Poxin (240 aa).

The active-site Proton donor is H46. Y181 acts as the Shared with catalytic histidine of dimeric partner in catalysis. Catalysis depends on K185, which acts as the Proton acceptor; shared with catalytic histidine of dimeric partner.

This sequence belongs to the poxin family. Homodimer.

The catalysed reaction is 2',3'-cGAMP + H2O = Gp(2'-5')Ap(3') + H(+). Functionally, nuclease that cleaves host 2',3'-cGAMP. The protein is Poxin (P26) of Lepidoptera (butterflies and moths).